A 163-amino-acid polypeptide reads, in one-letter code: Protein-export protein SecB (163 aa).

The protein belongs to the SecB family. Homotetramer, a dimer of dimers. One homotetramer interacts with 1 SecA dimer.

Its subcellular location is the cytoplasm. Functionally, one of the proteins required for the normal export of preproteins out of the cell cytoplasm. It is a molecular chaperone that binds to a subset of precursor proteins, maintaining them in a translocation-competent state. It also specifically binds to its receptor SecA. This is Protein-export protein SecB from Brucella anthropi (strain ATCC 49188 / DSM 6882 / CCUG 24695 / JCM 21032 / LMG 3331 / NBRC 15819 / NCTC 12168 / Alc 37) (Ochrobactrum anthropi).